The following is a 385-amino-acid chain: MNVFWFIPTHGDSRYLGTAEGARAADYDYFRQVAVAADTLGYDGVLLPTGRSCEDAWVVASSLIPATKRLKFLVAIRPGLSSPGLSARMASTFDRLSDGRLLINVVTGGDSAELEGDGLFADHDTRYAITDDFLHIWRGLLAESHENGGIDFDGEHLSAKGGKLLYPPVQRPHPPLWFGGSSPAAHAIAADHIDTYLSWGEPPAAVEKKIADIRARAAARGREIKFGIRLHVIVRETQEEAWRDADRLISRLDDDTIARAQQAFAKMDSEGQRRMAALHGGKRGSRQELEIYPNLWAGVGLVRGGAGTALVGNPEQIAARMREYAALGIETFILSGYPHLEESYRFAELVFPLVKGGGNTRRAGPLSGPFGEVVGNQYLPKASQS.

This sequence belongs to the SsuD family.

It catalyses the reaction an alkanesulfonate + FMNH2 + O2 = an aldehyde + FMN + sulfite + H2O + 2 H(+). Its function is as follows. Catalyzes the desulfonation of aliphatic sulfonates. In Burkholderia pseudomallei (strain 1710b), this protein is Alkanesulfonate monooxygenase.